Here is a 194-residue protein sequence, read N- to C-terminus: uncharacterized protein (194 aa).

A signal peptide spans 1–22 (MNKVTKTAIAGLLALFAGNAAA). An intrachain disulfide couples Cys-38 to Cys-78.

It belongs to the fimbrial protein family.

Its subcellular location is the fimbrium. Part of the yraHIJK fimbrial operon. Could contribute to adhesion to various surfaces in specific environmental niches. Increases adhesion to eukaryotic T24 bladder epithelial cells in the absence of fim operon. This is an uncharacterized protein from Escherichia coli (strain K12).